The primary structure comprises 97 residues: Large ribosomal subunit protein uL23 (97 aa).

Belongs to the universal ribosomal protein uL23 family. In terms of assembly, part of the 50S ribosomal subunit. Contacts protein L29, and trigger factor when it is bound to the ribosome.

In terms of biological role, one of the early assembly proteins it binds 23S rRNA. One of the proteins that surrounds the polypeptide exit tunnel on the outside of the ribosome. Forms the main docking site for trigger factor binding to the ribosome. This chain is Large ribosomal subunit protein uL23, found in Brucella abortus (strain S19).